Here is a 306-residue protein sequence, read N- to C-terminus: 17-beta-hydroxysteroid dehydrogenase type 3 (306 aa).

Residue G44 to L73 participates in NADP(+) binding. S181 serves as a coordination point for substrate. Catalysis depends on Y194, which acts as the Proton acceptor.

It belongs to the short-chain dehydrogenases/reductases (SDR) family. 17-beta-HSD 3 subfamily.

The protein resides in the endoplasmic reticulum. It carries out the reaction a 17beta-hydroxy steroid + NADP(+) = a 17-oxo steroid + NADPH + H(+). The enzyme catalyses testosterone + NADP(+) = androst-4-ene-3,17-dione + NADPH + H(+). It catalyses the reaction 17beta-estradiol + NADP(+) = estrone + NADPH + H(+). The catalysed reaction is 3beta-hydroxyandrost-5-en-17-one + NADPH + H(+) = androst-5-en-3beta,17beta-diol + NADP(+). It carries out the reaction 17beta-hydroxy-5alpha-androstan-3-one + NADP(+) = 5alpha-androstan-3,17-dione + NADPH + H(+). The enzyme catalyses androsterone + NADPH + H(+) = 5alpha-androstane-3alpha,17beta-diol + NADP(+). It catalyses the reaction 3beta-hydroxy-5alpha-androstan-17-one + NADPH + H(+) = 5alpha-androstane-3beta,17beta-diol + NADP(+). The catalysed reaction is androst-4-ene-3,11,17-trione + NADPH + H(+) = 17beta-hydroxyandrost-4-ene-3,11-dione + NADP(+). It carries out the reaction 11beta-hydroxyandrost-4-ene-3,17-dione + NADPH + H(+) = 11beta,17beta-dihydroxyandrost-4-ene-3-one + NADP(+). The protein operates within hormone biosynthesis; testosterone biosynthesis. It functions in the pathway steroid metabolism. In terms of biological role, catalyzes the conversion of 17-oxosteroids to 17beta-hydroxysteroids. Favors the reduction of androstenedione to testosterone. Testosterone is the key androgen driving male development and function. Uses NADPH while the two other EDH17B enzymes use NADH. Androgens such as epiandrosterone, dehydroepiandrosterone, androsterone and androstanedione are accepted as substrates and reduced at C-17. Can reduce 11-ketoandrostenedione as well as 11beta-hydroxyandrostenedione at C-17 to the respective testosterone forms. Plays a role in the rate-limiting-step for the maximum level of testosterone production by the testis but does not affect basal testosterone production. This Rattus norvegicus (Rat) protein is 17-beta-hydroxysteroid dehydrogenase type 3.